The chain runs to 561 residues: Putative cuticle collagen 145 (561 aa).

The N-terminal stretch at 1–30 (MEKILVTLSTGAASIAVLAVLFTIPSLYNT) is a signal peptide. A compositionally biased stretch (pro residues) spans 100–112 (TCPPGPPGPPGQP). Disordered stretches follow at residues 100 to 134 (TCPP…TYAP), 148 to 271 (PQGP…PGGP), 367 to 398 (TCPP…NTAT), and 422 to 540 (TGPA…GPGL). Triple-helical region stretches follow at residues 102 to 127 (PPGP…KGED) and 153 to 276 (GPEG…LPGN). Low complexity-rich tracts occupy residues 164–209 (AGPD…PGQD) and 219–265 (APGA…DGQP). Residues 367–379 (TCPPGPPGPPGQP) show a composition bias toward pro residues. The interval 413-544 (KCPQGPAGPT…PGGPGLPGND (132 aa)) is triple-helical region. Composition is skewed to low complexity over residues 422-467 (TGPA…PGQD) and 486-532 (APGA…DGQP). Residues 485–543 (GAPGAPGNAGPAGPAGQDGFPGQDGQPGPAGPAGQDGFPGNAGSDGQPGAPGGPGLPGN) form the Collagen-like domain.

Belongs to the cuticular collagen family. As to quaternary structure, collagen polypeptide chains are complexed within the cuticle by disulfide bonds and other types of covalent cross-links.

Functionally, nematode cuticles are composed largely of collagen-like proteins. The cuticle functions both as an exoskeleton and as a barrier to protect the worm from its environment. This Caenorhabditis briggsae protein is Putative cuticle collagen 145.